Consider the following 104-residue polypeptide: Cell division protein FtsB (104 aa).

Residues 1–3 (MGK) are Cytoplasmic-facing. A helical transmembrane segment spans residues 4-21 (LTLLLLVLLGWLQYSLWL). The Periplasmic portion of the chain corresponds to 22–104 (GKNGIHDYTR…NAQQGRPASQ (83 aa)). Positions 33-62 (DEDVASQQGNNAKLKARNDRLFAEIDDLNG) form a coiled coil.

This sequence belongs to the FtsB family. Part of a complex composed of FtsB, FtsL and FtsQ.

Its subcellular location is the cell inner membrane. Essential cell division protein. May link together the upstream cell division proteins, which are predominantly cytoplasmic, with the downstream cell division proteins, which are predominantly periplasmic. The polypeptide is Cell division protein FtsB (Erwinia tasmaniensis (strain DSM 17950 / CFBP 7177 / CIP 109463 / NCPPB 4357 / Et1/99)).